The chain runs to 563 residues: Nicalin (563 aa).

The first 29 residues, 1-29, serve as a signal peptide directing secretion; the sequence is MQDEIIDFFRSPALLFYMTLMLTICVVNG. The Lumenal portion of the chain corresponds to 30–522; the sequence is SQQVGEVVET…NRLVAERVKP (493 aa). N-linked (GlcNAc...) asparagine glycosylation is present at N232. Residues 523–543 traverse the membrane as a helical segment; that stretch reads AVFELVIAAGVFTYLSAFYYI. Residues 544-563 lie on the Cytoplasmic side of the membrane; that stretch reads ATHSQNTIEGTVAAIRKSIF.

It belongs to the nicastrin family. In terms of assembly, may interact with the levamisole-sensitive nicotinic acetylcholine receptor (L-AChR). May interact with nra-4 in the ER. Expressed in body wall, pharyngeal, and vulval muscles, excretory canal cell, head and motor neurons, and vulval epithelium.

Its subcellular location is the endoplasmic reticulum membrane. In terms of biological role, involved in the recognition and selection of protein complexes to exit the endoplasmic reticulum (ER). In muscles, regulates levamisole-sensitive nicotinic acetylcholine receptor (L-AChR) subunit composition, possibly by allowing only specific L-AChR subunit combinations to exit the ER. Specifically, may promote the inclusion of alpha subunits unc-38 and unc-29 into L-AChR. Regulates L-AChR sensitivity to agonists such as nicotine and levamisole at neuro-muscular junctions. In touch neurons, may prevent ER exit of incorrectly folded mec-4-mec-10 ion channel. The sequence is that of Nicalin from Caenorhabditis elegans.